The chain runs to 209 residues: Thiamine-phosphate synthase (209 aa).

4-amino-2-methyl-5-(diphosphooxymethyl)pyrimidine contacts are provided by residues 36 to 40 (QYRDK) and Asn68. 2 residues coordinate Mg(2+): Asp69 and Asp87. Thr106 lines the 4-amino-2-methyl-5-(diphosphooxymethyl)pyrimidine pocket. 133–135 (SST) is a binding site for 2-[(2R,5Z)-2-carboxy-4-methylthiazol-5(2H)-ylidene]ethyl phosphate. Lys136 contributes to the 4-amino-2-methyl-5-(diphosphooxymethyl)pyrimidine binding site. Gly163 provides a ligand contact to 2-[(2R,5Z)-2-carboxy-4-methylthiazol-5(2H)-ylidene]ethyl phosphate.

Belongs to the thiamine-phosphate synthase family. Requires Mg(2+) as cofactor.

It carries out the reaction 2-[(2R,5Z)-2-carboxy-4-methylthiazol-5(2H)-ylidene]ethyl phosphate + 4-amino-2-methyl-5-(diphosphooxymethyl)pyrimidine + 2 H(+) = thiamine phosphate + CO2 + diphosphate. It catalyses the reaction 2-(2-carboxy-4-methylthiazol-5-yl)ethyl phosphate + 4-amino-2-methyl-5-(diphosphooxymethyl)pyrimidine + 2 H(+) = thiamine phosphate + CO2 + diphosphate. The enzyme catalyses 4-methyl-5-(2-phosphooxyethyl)-thiazole + 4-amino-2-methyl-5-(diphosphooxymethyl)pyrimidine + H(+) = thiamine phosphate + diphosphate. It functions in the pathway cofactor biosynthesis; thiamine diphosphate biosynthesis; thiamine phosphate from 4-amino-2-methyl-5-diphosphomethylpyrimidine and 4-methyl-5-(2-phosphoethyl)-thiazole: step 1/1. Its function is as follows. Condenses 4-methyl-5-(beta-hydroxyethyl)thiazole monophosphate (THZ-P) and 2-methyl-4-amino-5-hydroxymethyl pyrimidine pyrophosphate (HMP-PP) to form thiamine monophosphate (TMP). The chain is Thiamine-phosphate synthase from Azotobacter vinelandii (strain DJ / ATCC BAA-1303).